The following is a 303-amino-acid chain: CDAN1-interacting nuclease 1 (303 aa).

The protein localises to the nucleus. It localises to the cytoplasm. May play a role in erythroid cell differentiation. This chain is CDAN1-interacting nuclease 1, found in Xenopus laevis (African clawed frog).